The primary structure comprises 286 residues: MNFKNVKVPKGPGGGVIAAVVIGGLSLYGATHTLYNVDGGHRAIVFNRLVGIKDKVYPEGTHLMIPWFERPIIYDVRAKPYLVESTSGSRDLQMVKIGLRVLTRPMADQLPEVYRSLGENYRERVLPSIIHETLKAVVAQYNASQLITQRESVSREIRKILTLRAANFHIALDDVSITGLTFGKEFTAAIEGKQVAAQEAERAKFIVEKAEQDKRSAVIRAEGEAKSAQLIGQAIANNQAFLTLRKIEAAREIAQTISRSANKVYLSSNDLLLNLQAMDLDVKPKK.

Over 1 to 12 (MNFKNVKVPKGP) the chain is Mitochondrial matrix. The helical; Signal-anchor for type II membrane protein transmembrane segment at 13-35 (GGGVIAAVVIGGLSLYGATHTLY) threads the bilayer. The Mitochondrial intermembrane segment spans residues 36 to 286 (NVDGGHRAIV…AMDLDVKPKK (251 aa)).

This sequence belongs to the prohibitin family. Component of a prohibitin multimeric complex in mitochondrial membranes. As to expression, mostly expressed in proliferative tissues, including vasculature, shoot and root apical tissues.

Its subcellular location is the mitochondrion inner membrane. Prohibitin probably acts as a holdase/unfoldase for the stabilization of newly synthesized mitochondrial proteins. The sequence is that of Prohibitin-6, mitochondrial (PHB6) from Arabidopsis thaliana (Mouse-ear cress).